A 597-amino-acid polypeptide reads, in one-letter code: Elongation factor 4 (597 aa).

Residues 2-184 (KNIRNFSIIA…EIVAKIPAPT (183 aa)) form the tr-type G domain. GTP contacts are provided by residues 14–19 (DHGKST) and 131–134 (NKID).

Belongs to the TRAFAC class translation factor GTPase superfamily. Classic translation factor GTPase family. LepA subfamily.

The protein resides in the cell inner membrane. The enzyme catalyses GTP + H2O = GDP + phosphate + H(+). Required for accurate and efficient protein synthesis under certain stress conditions. May act as a fidelity factor of the translation reaction, by catalyzing a one-codon backward translocation of tRNAs on improperly translocated ribosomes. Back-translocation proceeds from a post-translocation (POST) complex to a pre-translocation (PRE) complex, thus giving elongation factor G a second chance to translocate the tRNAs correctly. Binds to ribosomes in a GTP-dependent manner. The chain is Elongation factor 4 from Neisseria meningitidis serogroup C / serotype 2a (strain ATCC 700532 / DSM 15464 / FAM18).